The following is a 175-amino-acid chain: Large ribosomal subunit protein bL17 (175 aa).

Positions 124-175 (VKKSKPTAPAQAVATKPAVEETREAAAAQPQEPEVEISEVKDPAEECEAKAD) are disordered. The span at 161-175 (SEVKDPAEECEAKAD) shows a compositional bias: basic and acidic residues.

The protein belongs to the bacterial ribosomal protein bL17 family. Part of the 50S ribosomal subunit. Contacts protein L32.

This is Large ribosomal subunit protein bL17 from Geobacter sulfurreducens (strain ATCC 51573 / DSM 12127 / PCA).